The following is a 283-amino-acid chain: uncharacterized protein (283 aa).

N15 carries an N-linked (GlcNAc...) asparagine glycan. The PQ-loop 1 domain maps to 15–81 (NATASTVFAI…QELNIALKVQ (67 aa)). The next 6 helical transmembrane spans lie at 19 to 39 (STVFAILGTVCWCVQLIPQII), 48 to 68 (EGLDTLFILSWVVASIPLSVY), 108 to 128 (ALFVVISFMLFSGGLQAMLIL), 138 to 158 (VEWPVVFMGVLATVLVNIGFL), 170 to 190 (VTGISYLFLAIDSSGSLFSFL), and 206 to 226 (GLLFIIEMGVFVLAFIFNVLL). The PQ-loop 2 domain maps to 149–204 (ATVLVNIGFLPQYISIFRARAVTGISYLFLAIDSSGSLFSFLSLPFDRWDVLAAVD). An N-linked (GlcNAc...) asparagine glycan is attached at N228.

The protein localises to the membrane. This is an uncharacterized protein from Schizosaccharomyces pombe (strain 972 / ATCC 24843) (Fission yeast).